Here is a 577-residue protein sequence, read N- to C-terminus: Arginine--tRNA ligase (577 aa).

The 'HIGH' region motif lies at 124–132; sequence VAKEMHVGH.

It belongs to the class-I aminoacyl-tRNA synthetase family. As to quaternary structure, monomer.

The protein localises to the cytoplasm. It carries out the reaction tRNA(Arg) + L-arginine + ATP = L-arginyl-tRNA(Arg) + AMP + diphosphate. The sequence is that of Arginine--tRNA ligase from Salmonella typhi.